We begin with the raw amino-acid sequence, 261 residues long: Probable membrane transporter protein PD_1894 (261 aa).

Transmembrane regions (helical) follow at residues 6 to 26 (LIVT…LGGG), 45 to 64 (HIAI…ANLI), 78 to 98 (VIFA…GMLI), 99 to 119 (DGQR…LLML), 150 to 170 (AASG…LIFA), 175 to 195 (TINA…ITTL), 205 to 225 (WTIA…GTLL), and 239 to 259 (VFGL…WASL).

The protein belongs to the 4-toluene sulfonate uptake permease (TSUP) (TC 2.A.102) family.

Its subcellular location is the cell membrane. In Xylella fastidiosa (strain Temecula1 / ATCC 700964), this protein is Probable membrane transporter protein PD_1894.